The sequence spans 1408 residues: DNA-directed RNA polymerase subunit beta'' (1408 aa).

The protein belongs to the RNA polymerase beta' chain family. RpoC2 subfamily. In plastids the minimal PEP RNA polymerase catalytic core is composed of four subunits: alpha, beta, beta', and beta''. When a (nuclear-encoded) sigma factor is associated with the core the holoenzyme is formed, which can initiate transcription.

Its subcellular location is the plastid. It is found in the chloroplast. It catalyses the reaction RNA(n) + a ribonucleoside 5'-triphosphate = RNA(n+1) + diphosphate. In terms of biological role, DNA-dependent RNA polymerase catalyzes the transcription of DNA into RNA using the four ribonucleoside triphosphates as substrates. This chain is DNA-directed RNA polymerase subunit beta'', found in Psilotum nudum (Whisk fern).